A 186-amino-acid polypeptide reads, in one-letter code: ADP-ribosylation factor-like protein 6 (186 aa).

Gly-2 is lipidated: N-myristoyl glycine. GTP contacts are provided by residues 24–31 (GLDNSGKT), Thr-50, 69–73 (DMSGQ), Gly-72, 130–133 (NKMD), and Ala-164. Thr-50 contributes to the Mg(2+) binding site.

This sequence belongs to the small GTPase superfamily. Arf family. Interacts with SEC61B, ARL6IP1, ARL6IP2, ARL6IP3, ARL6IP4 ARL6IP5 and ARL6IP6. Interacts (GTP-bound form) with the BBSome a complex that contains BBS1, BBS2, BBS4, BBS5, BBS7, BBS8/TTC8, BBS9 and BBIP10. Interacts (GTP-free form) with IFT27. Most abundant in brain and kidney. Expressed in heart and eye. Isoform 2 is expressed only in the retina.

Its subcellular location is the cell projection. It is found in the cilium membrane. The protein localises to the cytoplasm. The protein resides in the cytoskeleton. It localises to the cilium axoneme. Its subcellular location is the cilium basal body. Its function is as follows. Involved in membrane protein trafficking at the base of the ciliary organelle. Mediates recruitment onto plasma membrane of the BBSome complex which would constitute a coat complex required for sorting of specific membrane proteins to the primary cilia. Together with BBS1, is necessary for correct trafficking of PKD1 to primary cilia. Together with the BBSome complex and LTZL1, controls SMO ciliary trafficking and contributes to the sonic hedgehog (SHH) pathway regulation. May regulate cilia assembly and disassembly and subsequent ciliary signaling events such as the Wnt signaling cascade. Isoform 2 may be required for proper retinal function and organization. The polypeptide is ADP-ribosylation factor-like protein 6 (Arl6) (Mus musculus (Mouse)).